The primary structure comprises 150 residues: Group IIC secretory phospholipase A2 (150 aa).

An N-terminal signal peptide occupies residues 1–20; that stretch reads MKGIAIFLVFIFYWTTSTLS. Intrachain disulfides connect Cys-46–Cys-143, Cys-48–Cys-64, Cys-63–Cys-121, Cys-69–Cys-150, Cys-70–Cys-114, Cys-79–Cys-107, Cys-97–Cys-112, and Cys-99–Cys-105. Positions 47, 49, and 51 each coordinate Ca(2+). Residue His-67 is part of the active site. Asp-68 is a binding site for Ca(2+). Asn-92 is a glycosylation site (N-linked (GlcNAc...) asparagine). Asp-115 is an active-site residue.

This sequence belongs to the phospholipase A2 family. Requires Ca(2+) as cofactor. In terms of tissue distribution, testis specific.

The protein localises to the secreted. It catalyses the reaction a 1,2-diacyl-sn-glycero-3-phosphocholine + H2O = a 1-acyl-sn-glycero-3-phosphocholine + a fatty acid + H(+). PA2 catalyzes the calcium-dependent hydrolysis of the 2-acyl groups in 3-sn-phosphoglycerides. Testis PA2 may be important in the production of prostaglandins, by the release of arachidonic acid, which in turn are necessary for the contractions of the seminiferous tubules and the testicular capsule; they also seem to decrease sperm transit time through the male reproductive tract. The chain is Group IIC secretory phospholipase A2 (Pla2g2c) from Mus musculus (Mouse).